Here is a 469-residue protein sequence, read N- to C-terminus: 3-isopropylmalate dehydratase large subunit (469 aa).

The [4Fe-4S] cluster site is built by C350, C410, and C413.

It belongs to the aconitase/IPM isomerase family. LeuC type 1 subfamily. As to quaternary structure, heterodimer of LeuC and LeuD. It depends on [4Fe-4S] cluster as a cofactor.

It catalyses the reaction (2R,3S)-3-isopropylmalate = (2S)-2-isopropylmalate. The protein operates within amino-acid biosynthesis; L-leucine biosynthesis; L-leucine from 3-methyl-2-oxobutanoate: step 2/4. In terms of biological role, catalyzes the isomerization between 2-isopropylmalate and 3-isopropylmalate, via the formation of 2-isopropylmaleate. The chain is 3-isopropylmalate dehydratase large subunit from Mesorhizobium japonicum (strain LMG 29417 / CECT 9101 / MAFF 303099) (Mesorhizobium loti (strain MAFF 303099)).